The sequence spans 883 residues: Protein SEY1 homolog (883 aa).

At 1-795 (MQMDRKTQII…ETGGKMSLKN (795 aa)) the chain is on the cytoplasmic side. The GB1/RHD3-type G domain occupies 33 to 279 (GFNYNVVAIL…IPSDGFAHYC (247 aa)). 43–50 (GSQSSGKS) provides a ligand contact to GTP. Residues 673-693 (LDEIMDVLKSKLDEISDNLSS) adopt a coiled-coil conformation. Residues 796 to 816 (VPLFFWVILLILGWNELLFFI) traverse the membrane as a helical segment. The Lumenal segment spans residues 817-819 (RFF). A helical transmembrane segment spans residues 820–840 (FRLNIILPLFLAAAVILSTLF). Residues 841–883 (FNGNMEVLSTINKVVFFLAKSSFGFYRQLQTMGEKVAQVPTAD) lie on the Cytoplasmic side of the membrane.

This sequence belongs to the TRAFAC class dynamin-like GTPase superfamily. GB1/RHD3 GTPase family. RHD3 subfamily.

It localises to the endoplasmic reticulum membrane. Its function is as follows. Probable GTP-binding protein involved in generating and maintaining the structure of the tubular endoplasmic reticulum network. This Plasmodium knowlesi (strain H) protein is Protein SEY1 homolog.